The primary structure comprises 324 residues: Glyoxylate/hydroxypyruvate reductase B (324 aa).

Catalysis depends on residues R237 and E266. Catalysis depends on H285, which acts as the Proton donor.

Belongs to the D-isomer specific 2-hydroxyacid dehydrogenase family. GhrB subfamily. Homodimer.

It is found in the cytoplasm. It carries out the reaction glycolate + NADP(+) = glyoxylate + NADPH + H(+). It catalyses the reaction (R)-glycerate + NAD(+) = 3-hydroxypyruvate + NADH + H(+). The enzyme catalyses (R)-glycerate + NADP(+) = 3-hydroxypyruvate + NADPH + H(+). Its function is as follows. Catalyzes the NADPH-dependent reduction of glyoxylate and hydroxypyruvate into glycolate and glycerate, respectively. The chain is Glyoxylate/hydroxypyruvate reductase B from Citrobacter koseri (strain ATCC BAA-895 / CDC 4225-83 / SGSC4696).